The following is a 265-amino-acid chain: ClpXP adapter protein SpxH (265 aa).

This sequence belongs to the SpxH family. As to quaternary structure, interacts with Spx.

It localises to the cytoplasm. Adapter protein required for efficient degradation of Spx by ClpXP under non-stress conditions. Interaction with Spx stabilizes Spx and exposes the C-terminus of Spx for recognition and proteolysis by ClpXP. This is ClpXP adapter protein SpxH from Staphylococcus epidermidis (strain ATCC 35984 / DSM 28319 / BCRC 17069 / CCUG 31568 / BM 3577 / RP62A).